Here is a 201-residue protein sequence, read N- to C-terminus: Alanine--tRNA ligase (201 aa).

Belongs to the class-II aminoacyl-tRNA synthetase family. Zn(2+) is required as a cofactor.

The protein resides in the cytoplasm. The enzyme catalyses tRNA(Ala) + L-alanine + ATP = L-alanyl-tRNA(Ala) + AMP + diphosphate. In terms of biological role, catalyzes the attachment of alanine to tRNA(Ala) in a two-step reaction: alanine is first activated by ATP to form Ala-AMP and then transferred to the acceptor end of tRNA(Ala). Also edits incorrectly charged Ser-tRNA(Ala) and Gly-tRNA(Ala) via its editing domain. The chain is Alanine--tRNA ligase (alaS) from Rhizobium leguminosarum bv. viciae.